We begin with the raw amino-acid sequence, 107 residues long: Phosphoribosyl-ATP pyrophosphatase (107 aa).

Belongs to the PRA-PH family.

The protein localises to the cytoplasm. The catalysed reaction is 1-(5-phospho-beta-D-ribosyl)-ATP + H2O = 1-(5-phospho-beta-D-ribosyl)-5'-AMP + diphosphate + H(+). It participates in amino-acid biosynthesis; L-histidine biosynthesis; L-histidine from 5-phospho-alpha-D-ribose 1-diphosphate: step 2/9. The polypeptide is Phosphoribosyl-ATP pyrophosphatase (Azoarcus sp. (strain BH72)).